The chain runs to 449 residues: Glutamyl-tRNA reductase (449 aa).

Residues 48–51 (TCNR), Ser-99, 104–106 (EDQ), and Gln-110 contribute to the substrate site. The active-site Nucleophile is Cys-49. 179-184 (GAGEIG) lines the NADP(+) pocket.

It belongs to the glutamyl-tRNA reductase family. In terms of assembly, homodimer.

It carries out the reaction (S)-4-amino-5-oxopentanoate + tRNA(Glu) + NADP(+) = L-glutamyl-tRNA(Glu) + NADPH + H(+). It participates in porphyrin-containing compound metabolism; protoporphyrin-IX biosynthesis; 5-aminolevulinate from L-glutamyl-tRNA(Glu): step 1/2. Catalyzes the NADPH-dependent reduction of glutamyl-tRNA(Glu) to glutamate 1-semialdehyde (GSA). In Methanosarcina barkeri (strain Fusaro / DSM 804), this protein is Glutamyl-tRNA reductase.